We begin with the raw amino-acid sequence, 249 residues long: Small ribosomal subunit protein uS2 (249 aa).

This sequence belongs to the universal ribosomal protein uS2 family.

The protein is Small ribosomal subunit protein uS2 of Bordetella parapertussis (strain 12822 / ATCC BAA-587 / NCTC 13253).